The primary structure comprises 91 residues: AGDAAAGKTLYDASCASCHGMQAQGQGMFPKLAGLTSERIKTTLVAFKSGDTATLKKEGLGGPMSAIMAPNAAGLSEQDMDNLSAYIATLK.

4 residues coordinate heme c: C15, C18, H19, and M64.

In terms of assembly, monomer. Binds 1 heme c group covalently per subunit.

This is Cytochrome c-554(547) from Halothiobacillus neapolitanus (Thiobacillus neapolitanus).